The chain runs to 134 residues: Alkaline proteinase inhibitor (134 aa).

The signal sequence occupies residues 1-26; it reads MVFAAWYLKFAFFVALAFSIIGGSMA. Cysteine 50 and cysteine 73 form a disulfide bridge.

It belongs to the protease inhibitor I38 family.

It is found in the periplasm. Functionally, inhibitor of the alkaline protease. In Photorhabdus luminescens (Xenorhabdus luminescens), this protein is Alkaline proteinase inhibitor (inh).